The following is a 660-amino-acid chain: DNA primase (660 aa).

The segment at 40–64 (CPFHKEKTPSFTVSPDKQFYYCFGC) adopts a CHC2-type zinc-finger fold. Residues 94-115 (GMEVPREQGRRDQKPRQPTDSP) are disordered. Residues 97-110 (VPREQGRRDQKPRQ) are compositionally biased toward basic and acidic residues. Residues 261-343 (DEIIVVEGYM…GRRARFLFLP (83 aa)) enclose the Toprim domain. Mg(2+) contacts are provided by glutamate 267, aspartate 311, and aspartate 313. 2 disordered regions span residues 425–449 (DPQQVEQLAQQAPATSSMPDYDPGY) and 476–519 (QAWK…APVE). Residues 428–442 (QVEQLAQQAPATSSM) show a composition bias toward polar residues. A compositionally biased stretch (basic and acidic residues) spans 488-498 (PWSDKPWDKNR).

The protein belongs to the DnaG primase family. In terms of assembly, monomer. Interacts with DnaB. It depends on Zn(2+) as a cofactor. Mg(2+) is required as a cofactor.

The enzyme catalyses ssDNA + n NTP = ssDNA/pppN(pN)n-1 hybrid + (n-1) diphosphate.. Functionally, RNA polymerase that catalyzes the synthesis of short RNA molecules used as primers for DNA polymerase during DNA replication. The sequence is that of DNA primase from Pseudomonas putida (strain ATCC 47054 / DSM 6125 / CFBP 8728 / NCIMB 11950 / KT2440).